The chain runs to 140 residues: Lymphocyte antigen 6L (140 aa).

Residues 1–20 (MAPLLLVLWASLVSMELTGG) form the signal peptide. In terms of domain architecture, UPAR/Ly6 spans 31–124 (LSCFECFKVL…GSWEGFWSLP (94 aa)). 2 cysteine pairs are disulfide-bonded: Cys33–Cys50 and Cys105–Cys110. Ser116 carries GPI-anchor amidated serine lipidation. Residues 117–140 (WEGFWSLPGRLLLPMGLGLFCTLL) constitute a propeptide, removed in mature form.

Its subcellular location is the cell membrane. This is Lymphocyte antigen 6L from Mus musculus (Mouse).